We begin with the raw amino-acid sequence, 348 residues long: MAKEHGAMRSVLNLIGSVMLPQDTSNCSDRHDTPSAPEFLSHLQPFQTVLLSIASFSTTIVLCLSLIHWFYVYKYVSIEKRRNKLYWLIAVFPVACSCSFIAMCVPRTAVILTCIGVLYYLMCLFVIVSLARHLFGGRESFSTCLQYDDRPIDFRSPPFCCIIPKLPTARSTEKNIRRLEWCVLQAPIVRSIIIFLDVVAVAEMREDATPYIRYSDMASLCSLLLAIFGVHTLARVTSNKLSAYCFMSMFRLVDISLLFFSAQQPMIFQNVLLRFNLISCGPLLNAQENAYFVCNFIITCEMLLLSVLATWLLAPRHNAMFDAYRPSMALSETTASLNETEQSMILDH.

The Extracellular portion of the chain corresponds to 1 to 49 (MAKEHGAMRSVLNLIGSVMLPQDTSNCSDRHDTPSAPEFLSHLQPFQTV). Asparagine 26 is a glycosylation site (N-linked (GlcNAc...) asparagine). The chain crosses the membrane as a helical span at residues 50 to 70 (LLSIASFSTTIVLCLSLIHWF). Over 71-84 (YVYKYVSIEKRRNK) the chain is Cytoplasmic. The helical transmembrane segment at 85-105 (LYWLIAVFPVACSCSFIAMCV) threads the bilayer. At 106–109 (PRTA) the chain is on the extracellular side. The helical transmembrane segment at 110 to 130 (VILTCIGVLYYLMCLFVIVSL) threads the bilayer. Residues 131–180 (ARHLFGGRESFSTCLQYDDRPIDFRSPPFCCIIPKLPTARSTEKNIRRLE) are Cytoplasmic-facing. Residues 181 to 201 (WCVLQAPIVRSIIIFLDVVAV) form a helical membrane-spanning segment. Residues 202-213 (AEMREDATPYIR) lie on the Extracellular side of the membrane. A helical transmembrane segment spans residues 214–234 (YSDMASLCSLLLAIFGVHTLA). Topologically, residues 235 to 240 (RVTSNK) are cytoplasmic. Residues 241 to 261 (LSAYCFMSMFRLVDISLLFFS) traverse the membrane as a helical segment. Residues 262–291 (AQQPMIFQNVLLRFNLISCGPLLNAQENAY) lie on the Extracellular side of the membrane. The chain crosses the membrane as a helical span at residues 292-312 (FVCNFIITCEMLLLSVLATWL). The Cytoplasmic portion of the chain corresponds to 313–348 (LAPRHNAMFDAYRPSMALSETTASLNETEQSMILDH).

Belongs to the OST-alpha family.

It localises to the cell membrane. Its function is as follows. Probable transporter. The chain is Organic solute transporter alpha-like protein 3 (osta-3) from Caenorhabditis elegans.